Consider the following 182-residue polypeptide: uncharacterized protein (182 aa).

BNR repeat units follow at residues 58 to 69 (WISFDAGENWET) and 102 to 113 (YITDDRGESWRA).

This is an uncharacterized protein from Saccharomyces cerevisiae (strain ATCC 204508 / S288c) (Baker's yeast).